Here is a 360-residue protein sequence, read N- to C-terminus: Phospho-N-acetylmuramoyl-pentapeptide-transferase (360 aa).

10 consecutive transmembrane segments (helical) span residues 2–22 (IAILVSGAVGLLVSLFGTPLF), 52–72 (MGGVVIIAATVLGYTVANISA), 80–100 (GLLLLFLMIGLGVIGFLDDFI), 114–134 (WKIIGQGVIGVTFSVLALQFP), 156–176 (LAFAGAAVGLVLFVIWANFLI), 189–209 (LDGLATGVSVFVFSAYVVVTM), 235–255 (LAIVTAAIVGACAGFLWWNAS), 259–279 (IFMGDTGALALGGALAGLSIL), 284–304 (FLAVIIGGLFVVIVLSDVIQI), and 338–358 (FWLIAALFVALGVGIFYAEWV).

Belongs to the glycosyltransferase 4 family. MraY subfamily. Mg(2+) serves as cofactor.

The protein localises to the cell membrane. It catalyses the reaction UDP-N-acetyl-alpha-D-muramoyl-L-alanyl-gamma-D-glutamyl-meso-2,6-diaminopimeloyl-D-alanyl-D-alanine + di-trans,octa-cis-undecaprenyl phosphate = di-trans,octa-cis-undecaprenyl diphospho-N-acetyl-alpha-D-muramoyl-L-alanyl-D-glutamyl-meso-2,6-diaminopimeloyl-D-alanyl-D-alanine + UMP. It functions in the pathway cell wall biogenesis; peptidoglycan biosynthesis. Catalyzes the initial step of the lipid cycle reactions in the biosynthesis of the cell wall peptidoglycan: transfers peptidoglycan precursor phospho-MurNAc-pentapeptide from UDP-MurNAc-pentapeptide onto the lipid carrier undecaprenyl phosphate, yielding undecaprenyl-pyrophosphoryl-MurNAc-pentapeptide, known as lipid I. The protein is Phospho-N-acetylmuramoyl-pentapeptide-transferase of Beutenbergia cavernae (strain ATCC BAA-8 / DSM 12333 / CCUG 43141 / JCM 11478 / NBRC 16432 / NCIMB 13614 / HKI 0122).